The chain runs to 464 residues: Asparagine--tRNA ligase (464 aa).

It belongs to the class-II aminoacyl-tRNA synthetase family. As to quaternary structure, homodimer.

The protein resides in the cytoplasm. The enzyme catalyses tRNA(Asn) + L-asparagine + ATP = L-asparaginyl-tRNA(Asn) + AMP + diphosphate + H(+). The polypeptide is Asparagine--tRNA ligase (Clostridium beijerinckii (strain ATCC 51743 / NCIMB 8052) (Clostridium acetobutylicum)).